A 206-amino-acid polypeptide reads, in one-letter code: Ribosomal RNA large subunit methyltransferase E (206 aa).

Residues Gly60, Trp62, Asp80, Asp96, and Asp121 each contribute to the S-adenosyl-L-methionine site. Catalysis depends on Lys161, which acts as the Proton acceptor.

This sequence belongs to the class I-like SAM-binding methyltransferase superfamily. RNA methyltransferase RlmE family.

Its subcellular location is the cytoplasm. The enzyme catalyses uridine(2552) in 23S rRNA + S-adenosyl-L-methionine = 2'-O-methyluridine(2552) in 23S rRNA + S-adenosyl-L-homocysteine + H(+). Its function is as follows. Specifically methylates the uridine in position 2552 of 23S rRNA at the 2'-O position of the ribose in the fully assembled 50S ribosomal subunit. The sequence is that of Ribosomal RNA large subunit methyltransferase E from Hahella chejuensis (strain KCTC 2396).